The following is a 198-amino-acid chain: Segregation and condensation protein B (198 aa).

Positions 167-198 (PKLADPEADDPDQNEMDLFFDRFNQSKEQEEE) are disordered. Over residues 172 to 181 (PEADDPDQNE) the composition is skewed to acidic residues.

It belongs to the ScpB family. Homodimer. Homodimerization may be required to stabilize the binding of ScpA to the Smc head domains. Component of a cohesin-like complex composed of ScpA, ScpB and the Smc homodimer, in which ScpA and ScpB bind to the head domain of Smc. The presence of the three proteins is required for the association of the complex with DNA.

The protein localises to the cytoplasm. In terms of biological role, participates in chromosomal partition during cell division. May act via the formation of a condensin-like complex containing Smc and ScpA that pull DNA away from mid-cell into both cell halves. This Listeria welshimeri serovar 6b (strain ATCC 35897 / DSM 20650 / CCUG 15529 / CIP 8149 / NCTC 11857 / SLCC 5334 / V8) protein is Segregation and condensation protein B.